Reading from the N-terminus, the 583-residue chain is 2-succinyl-5-enolpyruvyl-6-hydroxy-3-cyclohexene-1-carboxylate synthase (583 aa).

The protein belongs to the TPP enzyme family. MenD subfamily. Homodimer. Mg(2+) serves as cofactor. Mn(2+) is required as a cofactor. It depends on thiamine diphosphate as a cofactor.

The enzyme catalyses isochorismate + 2-oxoglutarate + H(+) = 5-enolpyruvoyl-6-hydroxy-2-succinyl-cyclohex-3-ene-1-carboxylate + CO2. The protein operates within quinol/quinone metabolism; 1,4-dihydroxy-2-naphthoate biosynthesis; 1,4-dihydroxy-2-naphthoate from chorismate: step 2/7. It functions in the pathway quinol/quinone metabolism; menaquinone biosynthesis. In terms of biological role, catalyzes the thiamine diphosphate-dependent decarboxylation of 2-oxoglutarate and the subsequent addition of the resulting succinic semialdehyde-thiamine pyrophosphate anion to isochorismate to yield 2-succinyl-5-enolpyruvyl-6-hydroxy-3-cyclohexene-1-carboxylate (SEPHCHC). The sequence is that of 2-succinyl-5-enolpyruvyl-6-hydroxy-3-cyclohexene-1-carboxylate synthase from Chlorobaculum parvum (strain DSM 263 / NCIMB 8327) (Chlorobium vibrioforme subsp. thiosulfatophilum).